A 173-amino-acid polypeptide reads, in one-letter code: Regulatory protein RecX (173 aa).

Belongs to the RecX family.

The protein localises to the cytoplasm. Functionally, modulates RecA activity. The chain is Regulatory protein RecX from Mycobacterium avium (strain 104).